The sequence spans 236 residues: 3-oxoacyl-[acyl-carrier-protein] reductase (236 aa).

At Met1 the chain carries N-acetylmethionine. NADP(+) contacts are provided by residues 11 to 14 and 34 to 35; these read SRGI and RN. N6-acetyllysine is present on Lys40. 83–85 is an NADP(+) binding site; the sequence is AAG. Lys96 bears the N6-acetyllysine mark. Substrate is bound at residue Ser134. Residues Tyr147, Lys151, and 180–182 each bind NADP(+); that span reads IHT. Tyr147 functions as the Proton acceptor in the catalytic mechanism. Residue Lys194 is modified to N6-acetyllysine.

It belongs to the short-chain dehydrogenases/reductases (SDR) family. As to quaternary structure, homotetramer (in vitro). Heterotetramer with HSD17B8; contains two molecules each of HSD17B8 and CBR4. Does not form homotetramers when HSD17B8 is coexpressed, only heterotetramers (in vitro).

It localises to the mitochondrion matrix. The catalysed reaction is a (3R)-hydroxyacyl-[ACP] + NADP(+) = a 3-oxoacyl-[ACP] + NADPH + H(+). It carries out the reaction a quinone + NADPH + H(+) = a quinol + NADP(+). It participates in lipid metabolism; fatty acid biosynthesis. In terms of biological role, component of the heterotetramer complex KAR (3-ketoacyl-[acyl carrier protein] reductase or 3-ketoacyl-[ACP] reductase) that forms part of the mitochondrial fatty acid synthase (mtFAS). Beta-subunit of the KAR heterotetramer complex, responsible for the 3-ketoacyl-ACP reductase activity of the mtFAS, reduces 3-oxoacyl-[ACP] to (3R)-hydroxyacyl-[ACP] in a NADPH-dependent manner with no chain length preference, thereby participating in mitochondrial fatty acid biosynthesis. The homotetramer has NADPH-dependent quinone reductase activity (in vitro), hence could play a role in protection against cytotoxicity of exogenous quinones. As a heterotetramer, it can also reduce 9,10-phenanthrenequinone, 1,4-benzoquinone and various other o-quinones and p-quinones (in vitro). The protein is 3-oxoacyl-[acyl-carrier-protein] reductase (Cbr4) of Rattus norvegicus (Rat).